The following is a 161-amino-acid chain: SsrA-binding protein (161 aa).

It belongs to the SmpB family.

The protein localises to the cytoplasm. Its function is as follows. Required for rescue of stalled ribosomes mediated by trans-translation. Binds to transfer-messenger RNA (tmRNA), required for stable association of tmRNA with ribosomes. tmRNA and SmpB together mimic tRNA shape, replacing the anticodon stem-loop with SmpB. tmRNA is encoded by the ssrA gene; the 2 termini fold to resemble tRNA(Ala) and it encodes a 'tag peptide', a short internal open reading frame. During trans-translation Ala-aminoacylated tmRNA acts like a tRNA, entering the A-site of stalled ribosomes, displacing the stalled mRNA. The ribosome then switches to translate the ORF on the tmRNA; the nascent peptide is terminated with the 'tag peptide' encoded by the tmRNA and targeted for degradation. The ribosome is freed to recommence translation, which seems to be the essential function of trans-translation. The chain is SsrA-binding protein from Haemophilus influenzae (strain 86-028NP).